The sequence spans 179 residues: Translation initiation factor IF-3 (179 aa).

It belongs to the IF-3 family. As to quaternary structure, monomer.

It is found in the cytoplasm. IF-3 binds to the 30S ribosomal subunit and shifts the equilibrium between 70S ribosomes and their 50S and 30S subunits in favor of the free subunits, thus enhancing the availability of 30S subunits on which protein synthesis initiation begins. The chain is Translation initiation factor IF-3 from Treponema pallidum (strain Nichols).